The following is a 459-amino-acid chain: Vanillin aminotransferase (459 aa).

Pyridoxal 5'-phosphate-binding positions include 115–116 (GS) and D255. K284 is modified (N6-(pyridoxal phosphate)lysine). 320 to 321 (FT) contributes to the pyridoxal 5'-phosphate binding site. Residues 428–459 (LSLEELDELIRIYGKALKDTEKRVEELKSQKK) are a coiled coil.

Belongs to the class-III pyridoxal-phosphate-dependent aminotransferase family. Expressed in placental tissue of immature fruit.

It carries out the reaction vanillin + L-alanine = vanillylamine + pyruvate. The protein operates within aromatic compound metabolism; phenylpropanoid biosynthesis. Functionally, involved in the biosynthesis of capsaicinoids natural products, pungent alkaloids synthesized from phenylpropanoid intermediates in the placental tissue of chili pepper fruit acting as repellant on herbivorous mammals and conferring spiciness to hot peppers. Can transfer an amine from vanillylamine to pyruvate forming vanillin and L-alanine. Can use pyruvate or oxaloacetate, but not 2-oxoglutarate as amino group acceptors. Is able to convert (S)-1-phenylethylamine into acetophenone in vitro. The sequence is that of Vanillin aminotransferase from Capsicum chinense (Scotch bonnet).